Here is a 230-residue protein sequence, read N- to C-terminus: TorCAD operon transcriptional regulatory protein TorR (230 aa).

The region spanning 4-117 (HIVIVEDEPV…ELVVRVKNLL (114 aa)) is the Response regulatory domain. D53 is modified (4-aspartylphosphate). Positions 132 to 227 (DNCYRFAGYC…QHGEGYFLAA (96 aa)) form a DNA-binding region, ompR/PhoB-type.

As to quaternary structure, interacts with TorI. TorI binds to the effector domain of TorR. This interaction, which does not interfere with TorR DNA binding activity, probably prevents the recruitment of RNA polymerase to the torCAD promoter. In terms of processing, phosphorylated and dephosphorylated by TorS.

The protein resides in the cytoplasm. Functionally, member of the two-component regulatory system TorS/TorR involved in the anaerobic utilization of trimethylamine-N-oxide (TMAO). Phosphorylated TorR activates the transcription of the torCAD operon by binding to four decameric boxes located in the torCAD promoter. Box1, 2 and 4 contain the DNA sequence 5'-CTGTTCATAT-3' and box3 contains the DNA sequence 5'-CCGTTCATCC-3'. Phosphorylated as well as unphosphorylated TorR negatively regulates its own expression by binding to box1 and 2. The chain is TorCAD operon transcriptional regulatory protein TorR (torR) from Escherichia coli (strain K12).